Consider the following 893-residue polypeptide: ATPase family gene 2 protein homolog A (893 aa).

Over residues 1–10 (MSSKKNRKRL) the composition is skewed to basic residues. Residues 1–26 (MSSKKNRKRLNQSAENGSSLPSAASS) are disordered. Residues 1 to 237 (MSSKKNRKRL…SLELSLQLSQ (237 aa)) form a required for interaction with AFG2B and CINP region. A compositionally biased stretch (polar residues) spans 11–25 (NQSAENGSSLPSAAS). T272 is subject to Phosphothreonine. 2 positions are modified to phosphoserine: S274 and S279. ATP contacts are provided by residues 394–401 (GPPGTGKT) and 668–675 (GPPGCSKT). Residue K859 forms a Glycyl lysine isopeptide (Lys-Gly) (interchain with G-Cter in SUMO2) linkage.

The protein belongs to the AAA ATPase family. AFG2 subfamily. As to quaternary structure, part of the 55LCC heterohexameric ATPase complex composed at least of AIRIM, AFG2A, AFG2B and CINP. Associates with pre-60S ribosomal particles.

It is found in the cytoplasm. The protein localises to the mitochondrion. The protein resides in the cytoskeleton. Its subcellular location is the spindle. It catalyses the reaction ATP + H2O = ADP + phosphate + H(+). AFG2A alone display limited ATPase activity and is not regulated by RNA or DNA binding. In the context of 55LCC heterohexameric ATPase complex, the ATPase activity increases and is stimulated by DNA binding and inhibited in presence of RNA. ATP-dependent chaperone part of the 55LCC heterohexameric ATPase complex which is chromatin-associated and promotes replisome proteostasis to maintain replication fork progression and genome stability. Required for replication fork progression, sister chromatid cohesion, and chromosome stability. The ATPase activity is specifically enhanced by replication fork DNA and is coupled to cysteine protease-dependent cleavage of replisome substrates in response to replication fork damage. Uses ATPase activity to process replisome substrates in S-phase, facilitating their proteolytic turnover from chromatin to ensure DNA replication and mitotic fidelity. Plays an essential role in the cytoplasmic maturation steps of pre-60S ribosomal particles by promoting the release of shuttling protein RSL24D1/RLP24 from the pre-ribosomal particles. May be involved in morphological and functional mitochondrial transformations during spermatogenesis. The polypeptide is ATPase family gene 2 protein homolog A (Homo sapiens (Human)).